Reading from the N-terminus, the 66-residue chain is Large ribosomal subunit protein uL29 (66 aa).

The protein belongs to the universal ribosomal protein uL29 family.

This Agrobacterium fabrum (strain C58 / ATCC 33970) (Agrobacterium tumefaciens (strain C58)) protein is Large ribosomal subunit protein uL29.